Reading from the N-terminus, the 72-residue chain is Translation initiation factor IF-1 (72 aa).

One can recognise an S1-like domain in the interval 1–72 (MAKEDSIEMQ…SKGRIVFRAR (72 aa)).

The protein belongs to the IF-1 family. Component of the 30S ribosomal translation pre-initiation complex which assembles on the 30S ribosome in the order IF-2 and IF-3, IF-1 and N-formylmethionyl-tRNA(fMet); mRNA recruitment can occur at any time during PIC assembly.

Its subcellular location is the cytoplasm. Its function is as follows. One of the essential components for the initiation of protein synthesis. Stabilizes the binding of IF-2 and IF-3 on the 30S subunit to which N-formylmethionyl-tRNA(fMet) subsequently binds. Helps modulate mRNA selection, yielding the 30S pre-initiation complex (PIC). Upon addition of the 50S ribosomal subunit IF-1, IF-2 and IF-3 are released leaving the mature 70S translation initiation complex. The polypeptide is Translation initiation factor IF-1 (Psychromonas ingrahamii (strain DSM 17664 / CCUG 51855 / 37)).